Here is a 541-residue protein sequence, read N- to C-terminus: MASMGTLAFDEYGRPFLIIKDQDRKSRLMGLEALKSHIMAAKAVANTMRTSLGPNGLDKMMVDKDGDVTVTNDGATILSMMDVDHQIAKLMVELSKSQDDEIGDGTTGVVVLAGALLEEAEQLLDRGIHPIRIADGYEQAARVAIEHLDKISDSVLVDIKDTEPLIQTAKTTLGSKVVNSCHRQMAEIAVNAVLTVADMERRDVDFELIKVEGKVGGRLEDTKLIKGVIVDKDFSHPQMPKKVEDAKIAILTCPFEPPKPKTKHKLDVTSVEDYKALQKYEKEKFEEMIQQIKETGANLAICQWGFDDEANHLLLQNNLPAVRWVGGPEIELIAIATGGRIVPRFSELTAEKLGFAGLVQEISFGTTKDKMLVIEQCKNSRAVTIFIRGGNKMIIEEAKRSLHDALCVIRNLIRDNRVVYGGGAAEISCALAVSQEADKCPTLEQYAMRAFADALEVIPMALSENSGMNPIQTMTEVRARQVKEMNPALGIDCLHKGTNDMKQQHVIETLIGKKQQISLATQMVRMILKIDDIRKPGESEE.

Ala2 is modified (N-acetylalanine). A Glycyl lysine isopeptide (Lys-Gly) (interchain with G-Cter in SUMO2) cross-link involves residue Lys20. Ser26 carries the post-translational modification Phosphoserine. Gly53 contacts ADP. Gly53 lines the ATP pocket. Asp104 lines the Mg(2+) pocket. ADP-binding residues include Gly105, Thr106, Thr107, and Ser175. The ATP site is built by Thr106 and Thr107. Glycyl lysine isopeptide (Lys-Gly) (interchain with G-Cter in SUMO2) cross-links involve residues Lys210, Lys214, Lys265, Lys275, and Lys279. At Ser346 the chain carries Phosphoserine. A Glycyl lysine isopeptide (Lys-Gly) (interchain with G-Cter in SUMO2) cross-link involves residue Lys392. ADP is bound by residues Gly422, Asp492, Glu508, and Lys513. ATP is bound at residue Gly422. At Ser539 the chain carries Phosphoserine.

Belongs to the TCP-1 chaperonin family. In terms of assembly, component of the chaperonin-containing T-complex (TRiC), a hexadecamer composed of two identical back-to-back stacked rings enclosing a protein folding chamber. Each ring is made up of eight different subunits: TCP1/CCT1, CCT2, CCT3, CCT4, CCT5, CCT6A/CCT6, CCT7, CCT8. Interacts with PACRG. Interacts with DNAAF4. Interacts with DLEC1. Interacts with SPMAP2. Post-translationally, ubiquitinated by the DCX(DCAF12) complex specifically recognizes the diglutamate (Glu-Glu) at the C-terminus, leading to its degradation.

The protein localises to the cytoplasm. Its subcellular location is the cytoskeleton. It localises to the microtubule organizing center. It is found in the centrosome. The catalysed reaction is ATP + H2O = ADP + phosphate + H(+). Its function is as follows. Component of the chaperonin-containing T-complex (TRiC), a molecular chaperone complex that assists the folding of actin, tubulin and other proteins upon ATP hydrolysis. The TRiC complex mediates the folding of WRAP53/TCAB1, thereby regulating telomere maintenance. As part of the TRiC complex may play a role in the assembly of BBSome, a complex involved in ciliogenesis regulating transports vesicles to the cilia. This chain is T-complex protein 1 subunit epsilon (CCT5), found in Homo sapiens (Human).